The following is a 369-amino-acid chain: Phosphate-binding protein PstS 3 (369 aa).

The N-terminal stretch at 1 to 21 (MKLNQFGAAIGLLATGALLSG) is a signal peptide. Cysteine 22 is lipidated: N-palmitoyl cysteine. The S-diacylglycerol cysteine moiety is linked to residue cysteine 22. Phosphate-binding positions include 55–57 (STA), serine 85, aspartate 103, and 190–192 (SGT).

Belongs to the PstS family. In terms of assembly, the complex is composed of two ATP-binding proteins (PstB), two transmembrane proteins (PstC and PstA) and a solute-binding protein (PstS).

The protein localises to the cell membrane. Its function is as follows. Part of the ABC transporter complex PstSACB involved in phosphate import. The protein is Phosphate-binding protein PstS 3 (pstS2) of Mycobacterium leprae (strain TN).